The chain runs to 378 residues: Copper-containing nitrite reductase (378 aa).

A signal peptide (tat-type signal) is located at residues Met1–Ala38. Plastocyanin-like domains lie at Ala39–Ile213 and Tyr214–Met378. Residues His133, His138, His173, Cys174, His183, Met188, and His344 each coordinate Cu cation.

The protein belongs to the multicopper oxidase family. As to quaternary structure, homotrimer. It depends on Cu(+) as a cofactor. Requires Cu(2+) as cofactor. FAD is required as a cofactor. Predicted to be exported by the Tat system. The position of the signal peptide cleavage has been experimentally proven.

Its subcellular location is the periplasm. It catalyses the reaction nitric oxide + Fe(III)-[cytochrome c] + H2O = Fe(II)-[cytochrome c] + nitrite + 2 H(+). It participates in nitrogen metabolism; nitrate reduction (denitrification); dinitrogen from nitrate: step 2/4. In Achromobacter cycloclastes, this protein is Copper-containing nitrite reductase (nirK).